Consider the following 383-residue polypeptide: Adaptive-response sensory kinase SasA (383 aa).

Residues 152–365 (MVAHELRTPL…CFTFTVPIWQ (214 aa)) form the Histidine kinase domain. His155 carries the phosphohistidine; by autocatalysis modification.

In terms of assembly, homooligomerizes. Interacts with KaiC. Participates in the KaiABC clock complex, whose core is composed of a KaiC homohexamer, 6 KaiB and up to 6 KaiA dimers. SasA and KaiB(fs) compete to bind to KaiC.

It catalyses the reaction ATP + protein L-histidine = ADP + protein N-phospho-L-histidine.. In terms of biological role, member of the two-component regulatory system SasA/RpaA involved in genome-wide circadian gene expression. One of several clock output pathways. Participates in the Kai clock protein complex, the main circadian regulator in cyanobacteria, via its interaction with KaiC. KaiC enhances the autophosphorylation activity of SasA, which then transfers its phosphate group to RpaA to activate it. In addition to its output function, recruits fold-shifted KaiB (KaiB(fs)) to KaiC to cooperatively form the KaiB(6):KaiC(6) complex (independent of SasA kinase activity). Required for robustness of the circadian rhythm of gene expression and is involved in clock output, also required for adaptation to light/dark cycles. The chain is Adaptive-response sensory kinase SasA from Parasynechococcus marenigrum (strain WH8102).